Consider the following 341-residue polypeptide: tRNA N6-adenosine threonylcarbamoyltransferase (341 aa).

Fe cation contacts are provided by H111 and H115. Substrate contacts are provided by residues 133 to 137, D166, G179, D183, and N273; that span reads AVSGG. Residue D301 coordinates Fe cation.

This sequence belongs to the KAE1 / TsaD family. Requires Fe(2+) as cofactor.

The protein resides in the cytoplasm. It carries out the reaction L-threonylcarbamoyladenylate + adenosine(37) in tRNA = N(6)-L-threonylcarbamoyladenosine(37) in tRNA + AMP + H(+). Required for the formation of a threonylcarbamoyl group on adenosine at position 37 (t(6)A37) in tRNAs that read codons beginning with adenine. Is involved in the transfer of the threonylcarbamoyl moiety of threonylcarbamoyl-AMP (TC-AMP) to the N6 group of A37, together with TsaE and TsaB. TsaD likely plays a direct catalytic role in this reaction. This chain is tRNA N6-adenosine threonylcarbamoyltransferase, found in Geotalea daltonii (strain DSM 22248 / JCM 15807 / FRC-32) (Geobacter daltonii).